The primary structure comprises 183 residues: ATP synthase subunit delta (183 aa).

This sequence belongs to the ATPase delta chain family. In terms of assembly, F-type ATPases have 2 components, F(1) - the catalytic core - and F(0) - the membrane proton channel. F(1) has five subunits: alpha(3), beta(3), gamma(1), delta(1), epsilon(1). F(0) has three main subunits: a(1), b(2) and c(10-14). The alpha and beta chains form an alternating ring which encloses part of the gamma chain. F(1) is attached to F(0) by a central stalk formed by the gamma and epsilon chains, while a peripheral stalk is formed by the delta and b chains.

The protein resides in the cell inner membrane. Its function is as follows. F(1)F(0) ATP synthase produces ATP from ADP in the presence of a proton or sodium gradient. F-type ATPases consist of two structural domains, F(1) containing the extramembraneous catalytic core and F(0) containing the membrane proton channel, linked together by a central stalk and a peripheral stalk. During catalysis, ATP synthesis in the catalytic domain of F(1) is coupled via a rotary mechanism of the central stalk subunits to proton translocation. Functionally, this protein is part of the stalk that links CF(0) to CF(1). It either transmits conformational changes from CF(0) to CF(1) or is implicated in proton conduction. The sequence is that of ATP synthase subunit delta from Vesicomyosocius okutanii subsp. Calyptogena okutanii (strain HA).